The primary structure comprises 344 residues: L-rhamnose-proton symporter (344 aa).

The next 10 membrane-spanning stretches (helical) occupy residues 4-24, 38-58, 68-88, 101-121, 131-151, 175-195, 214-234, 259-279, 290-310, and 323-343; these read AITM…CFYA, WSVG…ATLL, FSAS…IGNI, MGIG…TPII, TQGG…VGIV, LLLA…MNAA, LPSY…FCFI, LLLS…YAWG, MSWM…GLVL, and VLSL…LGMA.

It belongs to the L-rhamnose transporter (TC 2.A.7.6) family.

It is found in the cell inner membrane. It carries out the reaction L-rhamnopyranose(in) + H(+)(in) = L-rhamnopyranose(out) + H(+)(out). Functionally, uptake of L-rhamnose across the cytoplasmic membrane with the concomitant transport of protons into the cell (symport system). This chain is L-rhamnose-proton symporter, found in Klebsiella pneumoniae subsp. pneumoniae (strain ATCC 700721 / MGH 78578).